The chain runs to 88 residues: Beta-insect excitatory toxin 1 (88 aa).

The first 18 residues, 1–18, serve as a signal peptide directing secretion; the sequence is MKFLLLFLVVLPIMGVFG. One can recognise an LCN-type CS-alpha/beta domain in the interval 20-83; it reads KNGYAVDSSG…ISDTRKSYCD (64 aa). 4 disulfides stabilise this stretch: Cys-34–Cys-55, Cys-40–Cys-60, Cys-44–Cys-62, and Cys-56–Cys-82.

It belongs to the long (4 C-C) scorpion toxin superfamily. Sodium channel inhibitor family. Beta subfamily. In terms of tissue distribution, expressed by the venom gland.

It is found in the secreted. Its function is as follows. Excitatory insect beta-toxins induce a spastic paralysis. They bind voltage-independently at site-4 of sodium channels (Nav) and shift the voltage of activation toward more negative potentials thereby affecting sodium channel activation and promoting spontaneous and repetitive firing. This toxin is active only on insects. The sequence is that of Beta-insect excitatory toxin 1 from Androctonus australis (Sahara scorpion).